The sequence spans 1564 residues: NACHT domain- and WD repeat-containing protein 1 (1564 aa).

An NACHT domain is found at 335 to 661 (TPLVLFGPPG…LLAIAHRQLV (327 aa)). 341 to 348 (GPPGIGKT) provides a ligand contact to ATP. WD repeat units follow at residues 866 to 905 (GCHKGITAMAWGVEEKLLVIGTQDGIMAVWDMEEQHVIHM), 908 to 947 (GHTGEVRCVKIFAKGTLANSASKDYTLHLWNLLSGQEKFT), 956 to 994 (PAEPQIWNLHVDEAHKVVYSASGSKINAWNLETAEPVFH), 998 to 1037 (DASDPWMCMAVLASQATLLTVSRDGVVSLWSSATGKLQGK), 1044 to 1082 (KEETPTCAVSVQKQGKLVTGFSNGSISLVSSKGDRLLEK), 1083 to 1121 (LPDAVRFLVVSEDESLLAAGFGRSVRIFLADSRGFRRFM), 1126 to 1165 (EHEDMVETAVFGTENNLIITGSLDALIQVWSLSEQGTLLD), 1167 to 1207 (LEGV…RSRV), 1212 to 1251 (LDRTGLTAVSHNGSYVYFPKIGDKNKVTIWDLAEGEEQDS), 1253 to 1290 (DTSSEIRCLEVAEQRKLLFTGLVSGVVLVFPLNSRQDV), 1291 to 1327 (ICIPPPEARKAINCMSLSKCEDRLAIAYDNIVLVLDI), 1338 to 1376 (GPRYTFYTQLPETLSSVAILTDYRVVYSMTNGDLFLYEC), 1380 to 1418 (KAFPLETHRSRVACVEVSHKEQLVVSGSEDALLCLWDLQ), and 1425 to 1462 (EMSYTSSYCRGVQCACFSKDDKYVYVGLKDRSILVWSV).

As to quaternary structure, may interact with HSP90AA1, HSP90AB1 and BAG2. Expressed at highest levels in prostate, followed by testis, retina, trachea and optic nerve. Also detected in brain, epididymis, lung, vagina and pituitary. In the prostate, tends to be up-regulated during malignant progression compared to normal epithelium (at protein level).

It is found in the cytoplasm. The protein localises to the cytosol. Functionally, may play a role in the control of androgen receptor (AR) protein steady-state levels. This Homo sapiens (Human) protein is NACHT domain- and WD repeat-containing protein 1 (NWD1).